Consider the following 95-residue polypeptide: Small ribosomal subunit protein bS6 (95 aa).

Belongs to the bacterial ribosomal protein bS6 family.

In terms of biological role, binds together with bS18 to 16S ribosomal RNA. In Corynebacterium kroppenstedtii (strain DSM 44385 / JCM 11950 / CIP 105744 / CCUG 35717), this protein is Small ribosomal subunit protein bS6.